Here is a 298-residue protein sequence, read N- to C-terminus: Acetylglutamate kinase (298 aa).

Residues 69-70 (GG), Arg91, and Asn196 contribute to the substrate site.

The protein belongs to the acetylglutamate kinase family. ArgB subfamily.

It localises to the cytoplasm. The enzyme catalyses N-acetyl-L-glutamate + ATP = N-acetyl-L-glutamyl 5-phosphate + ADP. It functions in the pathway amino-acid biosynthesis; L-arginine biosynthesis; N(2)-acetyl-L-ornithine from L-glutamate: step 2/4. Catalyzes the ATP-dependent phosphorylation of N-acetyl-L-glutamate. This is Acetylglutamate kinase from Nitrobacter winogradskyi (strain ATCC 25391 / DSM 10237 / CIP 104748 / NCIMB 11846 / Nb-255).